Reading from the N-terminus, the 540-residue chain is Patellin-4 (540 aa).

Residue Ser53 is modified to Phosphoserine. The stretch at 61–183 (FADLKESEKK…EKKTEDVVTE (123 aa)) forms a coiled coil. A disordered region spans residues 89–140 (LKTKKKESSPMKEKKEEVVKPEAEVEKKKEEAAEEKVEEEKKSEAVVTEEAP). Over residues 94–140 (KESSPMKEKKEEVVKPEAEVEKKKEEAAEEKVEEEKKSEAVVTEEAP) the composition is skewed to basic and acidic residues. Residue Lys249 forms a Glycyl lysine isopeptide (Lys-Gly) (interchain with G-Cter in ubiquitin) linkage. Positions 258-428 (GEEFGEDLAT…QYGGFKTVDD (171 aa)) constitute a CRAL-TRIO domain. In terms of domain architecture, GOLD spans 433–534 (NETVSEVVVK…KKKVLYRYRT (102 aa)).

The protein belongs to the patellin family.

It is found in the membrane. The protein localises to the cytoplasm. In terms of biological role, carrier protein that may be involved in membrane-trafficking events associated with cell plate formation during cytokinesis. Binds to some hydrophobic molecules such as phosphoinositides and promotes their transfer between the different cellular sites. This Arabidopsis thaliana (Mouse-ear cress) protein is Patellin-4 (PATL4).